The chain runs to 195 residues: PRELI domain containing protein 3B (195 aa).

Positions Met1–Glu172 constitute a PRELI/MSF1 domain. Phosphoserine occurs at positions 46 and 51.

Belongs to the slowmo family.

This chain is PRELI domain containing protein 3B (Prelid3b), found in Rattus norvegicus (Rat).